Here is a 261-residue protein sequence, read N- to C-terminus: Carbonic anhydrase 1 (261 aa).

N-acetylalanine is present on alanine 2. Residues 4-261 (PDWGYDDKNG…LKGRTVRASF (258 aa)) enclose the Alpha-carbonic anhydrase domain. Histidine 65 functions as the Proton donor/acceptor in the catalytic mechanism. Zn(2+) is bound by residues histidine 95, histidine 97, and histidine 120. Substrate is bound by residues threonine 200 and 200-201 (TH). Residues 235–261 (EGDNPVPSQRNNRPTQPLKGRTVRASF) are disordered. A compositionally biased stretch (polar residues) spans 240–249 (VPSQRNNRPT).

It belongs to the alpha-carbonic anhydrase family. Zn(2+) serves as cofactor.

It is found in the cytoplasm. The enzyme catalyses hydrogencarbonate + H(+) = CO2 + H2O. It carries out the reaction urea = cyanamide + H2O. Inhibited by acetazolamide. Functionally, catalyzes the reversible hydration of carbon dioxide. Can hydrate cyanamide to urea. This Macaca nemestrina (Pig-tailed macaque) protein is Carbonic anhydrase 1 (CA1).